A 254-amino-acid polypeptide reads, in one-letter code: Triosephosphate isomerase (254 aa).

10-12 (NWK) is a binding site for substrate. H99 serves as the catalytic Electrophile. E169 functions as the Proton acceptor in the catalytic mechanism. Residues G175, S215, and 236-237 (GG) contribute to the substrate site.

The protein belongs to the triosephosphate isomerase family. As to quaternary structure, homodimer.

The protein resides in the cytoplasm. The catalysed reaction is D-glyceraldehyde 3-phosphate = dihydroxyacetone phosphate. The protein operates within carbohydrate biosynthesis; gluconeogenesis. It participates in carbohydrate degradation; glycolysis; D-glyceraldehyde 3-phosphate from glycerone phosphate: step 1/1. Its function is as follows. Involved in the gluconeogenesis. Catalyzes stereospecifically the conversion of dihydroxyacetone phosphate (DHAP) to D-glyceraldehyde-3-phosphate (G3P). This Chlamydia abortus (strain DSM 27085 / S26/3) (Chlamydophila abortus) protein is Triosephosphate isomerase.